We begin with the raw amino-acid sequence, 286 residues long: Beta-lactamase SHV-3 (286 aa).

An N-terminal signal peptide occupies residues 1–21 (MRYIRLCIISLLATLPLAVHA). The active-site Acyl-ester intermediate is Ser-66. Residues Cys-73 and Cys-119 are joined by a disulfide bond. Glu-164 acts as the Proton acceptor in catalysis. 230–232 (KTG) serves as a coordination point for substrate.

This sequence belongs to the class-A beta-lactamase family.

It catalyses the reaction a beta-lactam + H2O = a substituted beta-amino acid. Its function is as follows. This enzyme hydrolyzes cefotaxime, ceftazidime and other broad spectrum cephalosporins. The sequence is that of Beta-lactamase SHV-3 (bla) from Klebsiella pneumoniae.